The chain runs to 294 residues: ATP synthase gamma chain (294 aa).

It belongs to the ATPase gamma chain family. As to quaternary structure, F-type ATPases have 2 components, CF(1) - the catalytic core - and CF(0) - the membrane proton channel. CF(1) has five subunits: alpha(3), beta(3), gamma(1), delta(1), epsilon(1). CF(0) has three main subunits: a, b and c.

Its subcellular location is the cell inner membrane. Functionally, produces ATP from ADP in the presence of a proton gradient across the membrane. The gamma chain is believed to be important in regulating ATPase activity and the flow of protons through the CF(0) complex. This chain is ATP synthase gamma chain, found in Campylobacter jejuni subsp. jejuni serotype O:2 (strain ATCC 700819 / NCTC 11168).